Consider the following 928-residue polypeptide: DNA polymerase I (928 aa).

In terms of domain architecture, 5'-3' exonuclease spans 1–323; the sequence is MVQIPQNPLI…ADEAPEVTAT (323 aa). A 3'-5' exonuclease domain is found at 324–517; sequence VISYDNYVTI…LHLKMWPDLQ (194 aa). The tract at residues 324–928 is klenow fragment; it reads VISYDNYVTI…GSGENWDQAH (605 aa). The tract at residues 521–928 is polymerase; sequence GPLNVFENIE…GSGENWDQAH (408 aa).

It belongs to the DNA polymerase type-A family. Single-chain monomer with multiple functions.

The enzyme catalyses DNA(n) + a 2'-deoxyribonucleoside 5'-triphosphate = DNA(n+1) + diphosphate. In addition to polymerase activity, this DNA polymerase exhibits 3'-5' and 5'-3' exonuclease activity. It is able to utilize nicked circular duplex DNA as a template and can unwind the parental DNA strand from its template. Its function is as follows. Genetic interactions among priB, dam, lexA, nagC, polA, rdgB, rdgB, rep and uup link the PriA-PriB replication restart pathway to DNA double-strand break repair. The sequence is that of DNA polymerase I (polA) from Escherichia coli (strain K12).